A 472-amino-acid polypeptide reads, in one-letter code: Protein PIN-LIKES 1 (472 aa).

Residues Met1–Asp93 lie on the Lumenal side of the membrane. The helical transmembrane segment at Leu94–Tyr114 threads the bilayer. Over Leu115 to Asn133 the chain is Cytoplasmic. A helical membrane pass occupies residues Ile134–Tyr154. Residues Glu155–Trp161 are Lumenal-facing. A helical membrane pass occupies residues Phe162–Ile182. Over Lys183 to Gly193 the chain is Cytoplasmic. The helical transmembrane segment at Ile194 to Ala214 threads the bilayer. The Lumenal segment spans residues Ile215–Lys231. Residues Phe232–Val252 traverse the membrane as a helical segment. The Cytoplasmic portion of the chain corresponds to Tyr253–Thr309. The chain crosses the membrane as a helical span at residues Ile310 to Leu330. The Lumenal portion of the chain corresponds to Arg331–Ser347. The helical transmembrane segment at Val348–Leu368 threads the bilayer. The Cytoplasmic segment spans residues Asn369–Ser379. A helical membrane pass occupies residues Val380 to Val400. The Lumenal segment spans residues Arg401–Pro413. A helical membrane pass occupies residues Leu414–Ile434. At Thr435–Ser446 the chain is on the cytoplasmic side. A helical transmembrane segment spans residues Val447–Phe467. Residues Met468 to Ala472 lie on the Lumenal side of the membrane.

This sequence belongs to the auxin efflux carrier (TC 2.A.69.2) family. Expressed in flowers.

It localises to the endoplasmic reticulum membrane. Its function is as follows. Involved in cellular auxin homeostasis by regulating auxin metabolism. Regulates intracellular auxin accumulation at the endoplasmic reticulum and thus auxin availability for nuclear auxin signaling. The polypeptide is Protein PIN-LIKES 1 (Arabidopsis thaliana (Mouse-ear cress)).